Reading from the N-terminus, the 256-residue chain is Ribosomal RNA small subunit methyltransferase A (256 aa).

Residues histidine 12, leucine 14, glycine 39, glutamate 60, aspartate 81, and asparagine 103 each contribute to the S-adenosyl-L-methionine site.

Belongs to the class I-like SAM-binding methyltransferase superfamily. rRNA adenine N(6)-methyltransferase family. RsmA subfamily.

Its subcellular location is the cytoplasm. It carries out the reaction adenosine(1518)/adenosine(1519) in 16S rRNA + 4 S-adenosyl-L-methionine = N(6)-dimethyladenosine(1518)/N(6)-dimethyladenosine(1519) in 16S rRNA + 4 S-adenosyl-L-homocysteine + 4 H(+). Specifically dimethylates two adjacent adenosines (A1518 and A1519) in the loop of a conserved hairpin near the 3'-end of 16S rRNA in the 30S particle. May play a critical role in biogenesis of 30S subunits. The sequence is that of Ribosomal RNA small subunit methyltransferase A from Methylibium petroleiphilum (strain ATCC BAA-1232 / LMG 22953 / PM1).